The primary structure comprises 513 residues: MNGGDEVVAASADPSLPLEWRFSQVFGERSAGEEVQEVDIISAIEFDNSGNHLATGDRGGRVVLFERTDTNNSSGTRRELEEADYPLRHPEFRYKTEFQSHDPEFDYLKSLEIEEKINKIRWCQTANGALFLLSTNDKTIKFWKVQDKKIKKICDMNSDPSRTVGNGTVASSSNSNITNSCLVNGGVSEVNNSLCNDFSLPAGGISSLRLPVVVTSHESSPVARCRRVYAHAHDYHINSISNNSDGETFISADDLRINLWNLEISNQSFNIVDVKPAKMEDLSEVITSAEFHPTHCNMLAYSSSKGSIRLIDLRQSALCDSHSKLFEEPEQAGPKSFFTEIIASVSDIKFAKEGRYLLSRDYMTLKLWDINMDAGPVATFQVHEYLKPKLCDLYENDSIFDKFECCISGNGLRAATGSYSNLFRVFGVAPGSTETATLEASRNPMRRHVPIPSRPSRALSSITRVVSRGSESPGVDGNTNALDYTTKLLHLAWHPNENSIACAAANSLYMYYA.

Met-1 carries the N-acetylmethionine modification. 6 WD repeats span residues 36–75 (QEVD…NSSG), 112–153 (EIEE…IKKI), 232–270 (AHDY…QSFN), 281–321 (DLSE…LCDS), 340–378 (EIIA…GPVA), and 483–513 (DYTT…MYYA).

The protein belongs to the phosphatase 2A regulatory subunit B family. PP2A consists of a common heteromeric enzyme, composed of a catalytic subunit (subunits C), a constant regulatory subunit (subunit A), and a variety of regulatory subunits such as subunits B (the R2/B/PR55/B55, R3/B''/PR72/PR130/PR59 and R5/B'/B56 families). Interacts with SIC/RON3. As to expression, expressed ubiquitously.

In terms of biological role, the B regulatory subunit may modulate substrate selectivity and catalytic activity, and may also direct the localization of the catalytic enzyme to a particular subcellular compartment. In Arabidopsis thaliana (Mouse-ear cress), this protein is Serine/threonine protein phosphatase 2A 55 kDa regulatory subunit B alpha isoform (PP2AB1).